The sequence spans 100 residues: Urease subunit gamma (100 aa).

It belongs to the urease gamma subunit family. As to quaternary structure, heterotrimer of UreA (gamma), UreB (beta) and UreC (alpha) subunits. Three heterotrimers associate to form the active enzyme.

It is found in the cytoplasm. The catalysed reaction is urea + 2 H2O + H(+) = hydrogencarbonate + 2 NH4(+). Its pathway is nitrogen metabolism; urea degradation; CO(2) and NH(3) from urea (urease route): step 1/1. The polypeptide is Urease subunit gamma (Acetivibrio thermocellus (strain ATCC 27405 / DSM 1237 / JCM 9322 / NBRC 103400 / NCIMB 10682 / NRRL B-4536 / VPI 7372) (Clostridium thermocellum)).